The primary structure comprises 191 residues: MSQNITLIKDKILSDNYFTLRNITYDLTRRNGKVIRHKREVYDRGNGATILLYNSTKKTVVLVRQFRVATWVNGNEDGMLIETCAGLLDNDEPEVCIRKEAIEETGYDVGEVRKIFELYMSPGGVTELIHFFIAEYRDSERASTGGGVEDEDIEVLELPFSRALEMARSGEIRDGKTVLLLNYLHMSHLMG.

GDP-alpha-D-mannose-binding positions include tyrosine 17, lysine 38–glutamate 40, arginine 67, and alanine 85–leucine 87. A Nudix hydrolase domain is found at aspartate 43–leucine 180. Alanine 85, glutamate 100, and glutamate 104 together coordinate Mg(2+). The Nudix box motif lies at glycine 86 to glycine 106. Residues glutamate 104, glutamate 127, aspartate 150 to glutamate 151, and lysine 176 contribute to the GDP-alpha-D-mannose site. Glutamate 151 is a Mg(2+) binding site.

It belongs to the Nudix hydrolase family. NudK subfamily. Homodimer. Mg(2+) serves as cofactor.

It catalyses the reaction GDP-alpha-D-mannose + H2O = alpha-D-mannose 1-phosphate + GMP + 2 H(+). Functionally, nucleoside diphosphate sugar hydrolase that hydrolyzes GDP-mannose as its preferred substrate, yielding GMP and mannose-1-phosphate. This is GDP-mannose pyrophosphatase (nudK) from Salmonella arizonae (strain ATCC BAA-731 / CDC346-86 / RSK2980).